Consider the following 363-residue polypeptide: Probable methyltransferase-like protein 24 (363 aa).

The N-terminal stretch at 1-38 (MGTAKPPGRGCGALPRWLLGAALLLGLRLCMELRHAGS) is a signal peptide. Residues 37 to 62 (GSGPPGRRDLRGPPRTHLLPAPGPLR) form a disordered region.

Belongs to the methyltransferase superfamily.

It is found in the secreted. In terms of biological role, probable methyltransferase. This Rattus norvegicus (Rat) protein is Probable methyltransferase-like protein 24 (Mettl24).